We begin with the raw amino-acid sequence, 545 residues long: Glucose-6-phosphate isomerase (545 aa).

E351 (proton donor) is an active-site residue. Active-site residues include H382 and K510.

It belongs to the GPI family.

It localises to the cytoplasm. It catalyses the reaction alpha-D-glucose 6-phosphate = beta-D-fructose 6-phosphate. The protein operates within carbohydrate biosynthesis; gluconeogenesis. Its pathway is carbohydrate degradation; glycolysis; D-glyceraldehyde 3-phosphate and glycerone phosphate from D-glucose: step 2/4. Its function is as follows. Catalyzes the reversible isomerization of glucose-6-phosphate to fructose-6-phosphate. The protein is Glucose-6-phosphate isomerase of Shewanella frigidimarina (strain NCIMB 400).